The following is a 593-amino-acid chain: Serine/threonine-protein kinase SSN3 (593 aa).

One can recognise a Protein kinase domain in the interval 90–489 (YEIIGYIAAG…AIDALDHVYF (400 aa)). 96 to 104 (IAAGTYGKV) is an ATP binding site. Positions 161 to 199 (KPSHKRFTPPNNSNSTQIRSNSGSETNVRINSSSITNNS) are disordered. Positions 169–185 (PPNNSNSTQIRSNSGSE) are enriched in polar residues. The span at 186-199 (TNVRINSSSITNNS) shows a compositional bias: low complexity. K211 contributes to the ATP binding site. D312 serves as the catalytic Proton acceptor. Disordered stretches follow at residues 517-551 (DNDI…NMNG) and 569-593 (AAVS…KKRK). Polar residues predominate over residues 518-536 (NDITNVGNDNNQANHSQKQ). A compositionally biased stretch (low complexity) spans 540–551 (GNNNNKNGNMNG). The span at 573–585 (GNGNNPTSNTATG) shows a compositional bias: polar residues.

Belongs to the protein kinase superfamily. CMGC Ser/Thr protein kinase family. CDC2/CDKX subfamily. Component of the SRB8-11 complex, a regulatory module of the Mediator complex. Requires Mg(2+) as cofactor.

The protein resides in the nucleus. It carries out the reaction L-seryl-[protein] + ATP = O-phospho-L-seryl-[protein] + ADP + H(+). The catalysed reaction is L-threonyl-[protein] + ATP = O-phospho-L-threonyl-[protein] + ADP + H(+). It catalyses the reaction [DNA-directed RNA polymerase] + ATP = phospho-[DNA-directed RNA polymerase] + ADP + H(+). Its function is as follows. Component of the SRB8-11 complex. The SRB8-11 complex is a regulatory module of the Mediator complex which is itself involved in regulation of basal and activated RNA polymerase II-dependent transcription. The SRB8-11 complex may be involved in the transcriptional repression of a subset of genes regulated by Mediator. It may inhibit the association of the Mediator complex with RNA polymerase II to form the holoenzyme complex. The SRB8-11 complex phosphorylates the C-terminal domain (CTD) of the largest subunit of RNA polymerase II. This chain is Serine/threonine-protein kinase SSN3 (SSN3), found in Kluyveromyces lactis (strain ATCC 8585 / CBS 2359 / DSM 70799 / NBRC 1267 / NRRL Y-1140 / WM37) (Yeast).